Consider the following 194-residue polypeptide: FMN-dependent NADH:quinone oxidoreductase (194 aa).

FMN-binding positions include Ser10 and 90-93 (MYNL).

The protein belongs to the azoreductase type 1 family. Homodimer. Requires FMN as cofactor.

The enzyme catalyses 2 a quinone + NADH + H(+) = 2 a 1,4-benzosemiquinone + NAD(+). The catalysed reaction is N,N-dimethyl-1,4-phenylenediamine + anthranilate + 2 NAD(+) = 2-(4-dimethylaminophenyl)diazenylbenzoate + 2 NADH + 2 H(+). Its function is as follows. Quinone reductase that provides resistance to thiol-specific stress caused by electrophilic quinones. Also exhibits azoreductase activity. Catalyzes the reductive cleavage of the azo bond in aromatic azo compounds to the corresponding amines. The sequence is that of FMN-dependent NADH:quinone oxidoreductase from Haemophilus influenzae (strain ATCC 51907 / DSM 11121 / KW20 / Rd).